An 81-amino-acid chain; its full sequence is Photosystem I iron-sulfur center (81 aa).

4Fe-4S ferredoxin-type domains follow at residues 2–31 (SHSV…MIPW) and 39–68 (IASA…VRVY). [4Fe-4S] cluster contacts are provided by Cys-11, Cys-14, Cys-17, Cys-21, Cys-48, Cys-51, Cys-54, and Cys-58.

In terms of assembly, the eukaryotic PSI reaction center is composed of at least 11 subunits. [4Fe-4S] cluster is required as a cofactor.

The protein resides in the plastid thylakoid membrane. The catalysed reaction is reduced [plastocyanin] + hnu + oxidized [2Fe-2S]-[ferredoxin] = oxidized [plastocyanin] + reduced [2Fe-2S]-[ferredoxin]. Apoprotein for the two 4Fe-4S centers FA and FB of photosystem I (PSI); essential for photochemical activity. FB is the terminal electron acceptor of PSI, donating electrons to ferredoxin. The C-terminus interacts with PsaA/B/D and helps assemble the protein into the PSI complex. Required for binding of PsaD and PsaE to PSI. PSI is a plastocyanin-ferredoxin oxidoreductase, converting photonic excitation into a charge separation, which transfers an electron from the donor P700 chlorophyll pair to the spectroscopically characterized acceptors A0, A1, FX, FA and FB in turn. The chain is Photosystem I iron-sulfur center from Cuscuta reflexa (Southern Asian dodder).